Here is a 540-residue protein sequence, read N- to C-terminus: Calnexin homolog (540 aa).

Positions 1–29 (MELSRRKMCCYIQFCCFVLIGCFISQICA) are cleaved as a signal peptide. The Lumenal segment spans residues 30 to 469 (SSDAIFYESF…EKAETQPNIT (440 aa)). Ca(2+) contacts are provided by Ser38 and Asp69. Cys112 and Cys147 are disulfide-bonded. Residues Tyr116, Lys118, Tyr138, and Asp145 each coordinate an alpha-D-glucoside. The segment at 221-301 (LIPTKTIPDP…DWDDEEDGEW (81 aa)) is disordered. Residues 227–360 (IPDPDDKKPE…REIPNPDYFE (134 aa)) form a p domain (Extended arm) region. Residues 228–253 (PDPDDKKPEDWDERAKIPDPEATKPD) show a composition bias toward basic and acidic residues. Repeat copies occupy residues 229-240 (DPDDKKPEDWDE), 246-257 (DPEATKPDDWDE), 265-276 (DEEAEKPEGWLD), 284-295 (DPEAVKPEDWDD), and 299-309 (GEWEAPQIENP). 4 X approximate repeats stretches follow at residues 229–295 (DPDD…DWDD) and 299–356 (GEWE…IPNP). Composition is skewed to acidic residues over residues 254–285 (DWDE…IDDP) and 292–301 (DWDDEEDGEW). Cysteines 311 and 317 form a disulfide. Tandem repeats lie at residues 318-328 (GEWRRPLKRNP), 332-342 (GKWHAPLIDNP), and 346-356 (GIWKPREIPNP). Glu375 contacts an alpha-D-glucoside. Asp386 provides a ligand contact to Ca(2+). N-linked (GlcNAc...) asparagine glycosylation is present at Asn467. A helical transmembrane segment spans residues 470–490 (IGVIVSIIVVIFSILLKLLFG). Topologically, residues 491 to 540 (GKKAAPKVNVVPKKKEEPEASNTAEVREGEEEKTEGEVAAAPRRRPRRDT) are cytoplasmic. Residues 499-540 (NVVPKKKEEPEASNTAEVREGEEEKTEGEVAAAPRRRPRRDT) form a disordered region.

Belongs to the calreticulin family.

The protein localises to the endoplasmic reticulum membrane. Its function is as follows. Calcium-binding protein that interacts with newly synthesized monoglucosylated glycoproteins in the endoplasmic reticulum. It may act in assisting protein assembly and/or in the retention within the ER of unassembled protein subunits. It seems to play a major role in the quality control apparatus of the ER by the retention of incorrectly folded proteins. This is Calnexin homolog from Helianthus tuberosus (Jerusalem artichoke).